The chain runs to 305 residues: UDP-3-O-acyl-N-acetylglucosamine deacetylase (305 aa).

3 residues coordinate Zn(2+): histidine 78, histidine 235, and aspartate 239. Histidine 262 acts as the Proton donor in catalysis.

This sequence belongs to the LpxC family. The cofactor is Zn(2+).

It carries out the reaction a UDP-3-O-[(3R)-3-hydroxyacyl]-N-acetyl-alpha-D-glucosamine + H2O = a UDP-3-O-[(3R)-3-hydroxyacyl]-alpha-D-glucosamine + acetate. Its pathway is glycolipid biosynthesis; lipid IV(A) biosynthesis; lipid IV(A) from (3R)-3-hydroxytetradecanoyl-[acyl-carrier-protein] and UDP-N-acetyl-alpha-D-glucosamine: step 2/6. In terms of biological role, catalyzes the hydrolysis of UDP-3-O-myristoyl-N-acetylglucosamine to form UDP-3-O-myristoylglucosamine and acetate, the committed step in lipid A biosynthesis. In Citrifermentans bemidjiense (strain ATCC BAA-1014 / DSM 16622 / JCM 12645 / Bem) (Geobacter bemidjiensis), this protein is UDP-3-O-acyl-N-acetylglucosamine deacetylase.